Here is a 142-residue protein sequence, read N- to C-terminus: Probable pilin MJ0832.1 (142 aa).

A propeptide spanning residues 1–8 is cleaved from the precursor; it reads MLKFRKRG. The short motif at 9–17 is the QXSXEXXXL element; it reads QISLEFSLL.

Post-translationally, the N-terminus is cleaved by the prepilin peptidase EppA, which recognizes the class III signal sequence.

It is found in the secreted. The protein localises to the cell surface. It localises to the fimbrium. This chain is Probable pilin MJ0832.1, found in Methanocaldococcus jannaschii (strain ATCC 43067 / DSM 2661 / JAL-1 / JCM 10045 / NBRC 100440) (Methanococcus jannaschii).